A 398-amino-acid polypeptide reads, in one-letter code: Histidinol-phosphate aminotransferase (398 aa).

Over residues Met1–Pro10 the composition is skewed to polar residues. The segment at Met1–Pro30 is disordered. Position 234 is an N6-(pyridoxal phosphate)lysine (Lys234).

This sequence belongs to the class-II pyridoxal-phosphate-dependent aminotransferase family. Histidinol-phosphate aminotransferase subfamily. In terms of assembly, homodimer. The cofactor is pyridoxal 5'-phosphate.

It catalyses the reaction L-histidinol phosphate + 2-oxoglutarate = 3-(imidazol-4-yl)-2-oxopropyl phosphate + L-glutamate. Its pathway is amino-acid biosynthesis; L-histidine biosynthesis; L-histidine from 5-phospho-alpha-D-ribose 1-diphosphate: step 7/9. This is Histidinol-phosphate aminotransferase from Mycolicibacterium paratuberculosis (strain ATCC BAA-968 / K-10) (Mycobacterium paratuberculosis).